The sequence spans 462 residues: tRNA modification GTPase MnmE (462 aa).

Arginine 22, glutamate 87, and arginine 126 together coordinate (6S)-5-formyl-5,6,7,8-tetrahydrofolate. The TrmE-type G domain occupies 220 to 382; it reads GLKVAIVGRP…LARKVQEIVL (163 aa). Asparagine 230 is a K(+) binding site. GTP is bound by residues 230–235, 249–255, and 274–277; these read NVGKSS, SNIPGTT, and DTAG. Serine 234 is a binding site for Mg(2+). K(+) is bound by residues serine 249, isoleucine 251, and threonine 254. Residue threonine 255 coordinates Mg(2+). Lysine 462 provides a ligand contact to (6S)-5-formyl-5,6,7,8-tetrahydrofolate.

This sequence belongs to the TRAFAC class TrmE-Era-EngA-EngB-Septin-like GTPase superfamily. TrmE GTPase family. In terms of assembly, homodimer. Heterotetramer of two MnmE and two MnmG subunits. K(+) serves as cofactor.

Its subcellular location is the cytoplasm. In terms of biological role, exhibits a very high intrinsic GTPase hydrolysis rate. Involved in the addition of a carboxymethylaminomethyl (cmnm) group at the wobble position (U34) of certain tRNAs, forming tRNA-cmnm(5)s(2)U34. The protein is tRNA modification GTPase MnmE of Moorella thermoacetica (strain ATCC 39073 / JCM 9320).